The following is a 790-amino-acid chain: cAMP and cAMP-inhibited cGMP 3',5'-cyclic phosphodiesterase 10A (790 aa).

3',5'-cyclic AMP contacts are provided by residues 290–291, 334–335, Thr368, Gln387, and His519; these read RC and IA. The PDEase domain occupies 446–763; the sequence is TSEEWQGLMR…NQWEKVIRGE (318 aa). Residue His519 is the Proton donor of the active site. His519 is a binding site for 3',5'-cyclic GMP. 4 residues coordinate a divalent metal cation: His523, His557, Asp558, and Asp668. Gln720 contributes to the 3',5'-cyclic AMP binding site. 3',5'-cyclic GMP is bound at residue Gln720. The disordered stretch occupies residues 768-790; the sequence is WISGPGPAPSKSTPEKLNVKVED. Basic and acidic residues predominate over residues 780–790; the sequence is TPEKLNVKVED.

Belongs to the cyclic nucleotide phosphodiesterase family. In terms of assembly, homodimer. A divalent metal cation is required as a cofactor. Detected in striatum (at protein level). Detected in testis and brain.

It localises to the cytoplasm. The protein resides in the cytosol. It carries out the reaction a nucleoside 3',5'-cyclic phosphate + H2O = a nucleoside 5'-phosphate + H(+). The enzyme catalyses 3',5'-cyclic AMP + H2O = AMP + H(+). The catalysed reaction is 3',5'-cyclic GMP + H2O = GMP + H(+). The protein operates within purine metabolism; 3',5'-cyclic AMP degradation; AMP from 3',5'-cyclic AMP: step 1/1. Its pathway is purine metabolism; 3',5'-cyclic GMP degradation; GMP from 3',5'-cyclic GMP: step 1/1. In terms of biological role, plays a role in signal transduction by regulating the intracellular concentration of cyclic nucleotides. Can hydrolyze both cAMP and cGMP, but has higher affinity for cAMP and is more efficient with cAMP as substrate. May play a critical role in regulating cAMP and cGMP levels in the striatum, a region of the brain that contributes to the control of movement and cognition. This chain is cAMP and cAMP-inhibited cGMP 3',5'-cyclic phosphodiesterase 10A (Pde10a), found in Mus musculus (Mouse).